A 1752-amino-acid chain; its full sequence is DNA-directed RNA polymerase II subunit rpb1 (1752 aa).

C69, C72, C79, H82, C109, C112, C150, and C175 together coordinate Zn(2+). Residues D487, D489, and D491 each coordinate Mg(2+). The segment at 816-828 (PQEFFFHAMAGRE) is bridging helix. K1252 participates in a covalent cross-link: Glycyl lysine isopeptide (Lys-Gly) (interchain with G-Cter in ubiquitin). Phosphoserine is present on residues S1489, S1499, S1506, and S1529. Residue Y1531 is modified to Phosphotyrosine. Residues 1554–1752 (TSPSYSPSSP…SPSYSPTSPS (199 aa)) form a disordered region. 5 consecutive repeat copies span residues 1558–1564 (YSPSSPG), 1578–1584 (YSPTSPS), 1585–1591 (YSPTSPS), 1592–1598 (YSPTSPS), and 1599–1605 (YSPTSPS). A C-terminal domain (CTD); 26 X 7 AA approximate tandem repeats of Y-S-P-[TS]-S-P-S region spans residues 1558-1752 (YSPSSPGYST…SPSYSPTSPS (195 aa)). Residues 1606–1612 (YSATSPS) form a 6; approximate repeat. 20 tandem repeats follow at residues 1613–1619 (YSPTSPS), 1620–1626 (YSPTSPS), 1627–1633 (YSPTSPS), 1634–1640 (YSPTSPS), 1641–1647 (YSPTSPS), 1648–1654 (YSPTSPS), 1655–1661 (YSPTSPS), 1662–1668 (YSPTSPS), 1669–1675 (YSPTSPS), 1676–1682 (YSPTSPS), 1683–1689 (YSPTSPS), 1690–1696 (YSPTSPS), 1697–1703 (YSPTSPS), 1704–1710 (YSPTSPS), 1711–1717 (YSPTSPS), 1718–1724 (YSPTSPS), 1725–1731 (YSPTSPS), 1732–1738 (YSPTSPS), 1739–1745 (YSPTSPS), and 1746–1752 (YSPTSPS).

The protein belongs to the RNA polymerase beta' chain family. In terms of assembly, component of the RNA polymerase II (Pol II) complex consisting of 12 subunits. The tandem 7 residues repeats in the C-terminal domain (CTD) can be highly phosphorylated. The phosphorylation activates Pol II. Phosphorylation occurs mainly at residues 'Ser-2' and 'Ser-5' of the heptapeptide repeat. The phosphorylation state is believed to result from the balanced action of site-specific CTD kinases and phosphatase, and a 'CTD code' that specifies the position of Pol II within the transcription cycle has been proposed. In terms of processing, following transcription stress, the elongating form of RNA polymerase II (RNA pol IIo) is polyubiquitinated via 'Lys-63'-linkages on Lys-1252 at DNA damage sites without leading to degradation: ubiquitination promotes RNA pol IIo backtracking to allow access by the transcription-coupled nucleotide excision repair (TC-NER) machinery. Subsequent def1-dependent polyubiquitination by the elongin complex via 'Lys-48'-linkages may lead to proteasome-mediated degradation; presumably at stalled RNA pol II where TC-NER has failed, to halt global transcription and enable 'last resort' DNA repair pathways.

The protein resides in the nucleus. The catalysed reaction is RNA(n) + a ribonucleoside 5'-triphosphate = RNA(n+1) + diphosphate. DNA-dependent RNA polymerase catalyzes the transcription of DNA into RNA using the four ribonucleoside triphosphates as substrates. Largest and catalytic component of RNA polymerase II which synthesizes mRNA precursors and many functional non-coding RNAs. Forms the polymerase active center together with the second largest subunit. Pol II is the central component of the basal RNA polymerase II transcription machinery. It is composed of mobile elements that move relative to each other. RPB1 is part of the core element with the central large cleft, the clamp element that moves to open and close the cleft and the jaws that are thought to grab the incoming DNA template. At the start of transcription, a single-stranded DNA template strand of the promoter is positioned within the central active site cleft of Pol II. A bridging helix emanates from RPB1 and crosses the cleft near the catalytic site and is thought to promote translocation of Pol II by acting as a ratchet that moves the RNA-DNA hybrid through the active site by switching from straight to bent conformations at each step of nucleotide addition. During transcription elongation, Pol II moves on the template as the transcript elongates. Elongation is influenced by the phosphorylation status of the C-terminal domain (CTD) of Pol II largest subunit (RPB1), which serves as a platform for assembly of factors that regulate transcription initiation, elongation, termination and mRNA processing. The sequence is that of DNA-directed RNA polymerase II subunit rpb1 (rpb1) from Schizosaccharomyces pombe (strain 972 / ATCC 24843) (Fission yeast).